A 332-amino-acid polypeptide reads, in one-letter code: UPF0194 membrane protein YbhG (332 aa).

An N-terminal signal peptide occupies residues 1–26 (MMKKPVVIELAVVVLAAVVAGGYWWY). Residues 108-209 (EEIAQAAAAV…LNLQDSTLIA (102 aa)) are a coiled coil.

The protein belongs to the UPF0194 family.

The protein localises to the periplasm. This chain is UPF0194 membrane protein YbhG (ybhG), found in Shigella sonnei (strain Ss046).